We begin with the raw amino-acid sequence, 216 residues long: 3-isopropylmalate dehydratase small subunit (216 aa).

This sequence belongs to the LeuD family. LeuD type 1 subfamily. In terms of assembly, heterodimer of LeuC and LeuD.

The catalysed reaction is (2R,3S)-3-isopropylmalate = (2S)-2-isopropylmalate. Its pathway is amino-acid biosynthesis; L-leucine biosynthesis; L-leucine from 3-methyl-2-oxobutanoate: step 2/4. Catalyzes the isomerization between 2-isopropylmalate and 3-isopropylmalate, via the formation of 2-isopropylmaleate. This Ralstonia nicotianae (strain ATCC BAA-1114 / GMI1000) (Ralstonia solanacearum) protein is 3-isopropylmalate dehydratase small subunit.